We begin with the raw amino-acid sequence, 114 residues long: Holo-[acyl-carrier-protein] synthase (114 aa).

Asp-5 and Glu-50 together coordinate Mg(2+).

Belongs to the P-Pant transferase superfamily. AcpS family. The cofactor is Mg(2+).

It localises to the cytoplasm. It carries out the reaction apo-[ACP] + CoA = holo-[ACP] + adenosine 3',5'-bisphosphate + H(+). Functionally, transfers the 4'-phosphopantetheine moiety from coenzyme A to a Ser of acyl-carrier-protein. This Campylobacter curvus (strain 525.92) protein is Holo-[acyl-carrier-protein] synthase.